The sequence spans 154 residues: Proteasome subunit beta type-4 (154 aa).

Methionine 1 carries the N-acetylmethionine modification. A propeptide spanning residues 1–45 (MESILESRSGHWAGGPAPGQFYRIPPTPGSIVDPXSVLYGSPITR) is cleaved from the precursor. Tyrosine 102 carries the phosphotyrosine modification.

Belongs to the peptidase T1B family. In terms of assembly, the 26S proteasome consists of a 20S proteasome core and two 19S regulatory subunits. The 20S proteasome core is a barrel-shaped complex made of 28 subunits that are arranged in four stacked rings. The two outer rings are each formed by seven alpha subunits, and the two inner rings are formed by seven beta subunits. The proteolytic activity is exerted by three beta-subunits PSMB5, PSMB6 and PSMB7. Forms a ternary complex with SMAD1 and OAZ1 before PSMB4 is incorporated into the 20S proteasome. Interacts with PRPF19.

The protein resides in the cytoplasm. The protein localises to the nucleus. In terms of biological role, non-catalytic component of the 20S core proteasome complex involved in the proteolytic degradation of most intracellular proteins. This complex plays numerous essential roles within the cell by associating with different regulatory particles. Associated with two 19S regulatory particles, forms the 26S proteasome and thus participates in the ATP-dependent degradation of ubiquitinated proteins. The 26S proteasome plays a key role in the maintenance of protein homeostasis by removing misfolded or damaged proteins that could impair cellular functions, and by removing proteins whose functions are no longer required. Associated with the PA200 or PA28, the 20S proteasome mediates ubiquitin-independent protein degradation. This type of proteolysis is required in several pathways including spermatogenesis (20S-PA200 complex) or generation of a subset of MHC class I-presented antigenic peptides (20S-PA28 complex). SMAD1/OAZ1/PSMB4 complex mediates the degradation of the CREBBP/EP300 repressor SNIP1. This is Proteasome subunit beta type-4 (PSMB4) from Sus scrofa (Pig).